Consider the following 178-residue polypeptide: ATP-dependent protease subunit HslV (178 aa).

Threonine 7 is a catalytic residue. The Na(+) site is built by glycine 162, cysteine 165, and threonine 168.

This sequence belongs to the peptidase T1B family. HslV subfamily. In terms of assembly, a double ring-shaped homohexamer of HslV is capped on each side by a ring-shaped HslU homohexamer. The assembly of the HslU/HslV complex is dependent on binding of ATP.

The protein localises to the cytoplasm. The enzyme catalyses ATP-dependent cleavage of peptide bonds with broad specificity.. With respect to regulation, allosterically activated by HslU binding. In terms of biological role, protease subunit of a proteasome-like degradation complex believed to be a general protein degrading machinery. The protein is ATP-dependent protease subunit HslV of Janthinobacterium sp. (strain Marseille) (Minibacterium massiliensis).